Reading from the N-terminus, the 1632-residue chain is uncharacterized protein (1632 aa).

Residues 1–15 (MSNNKQTAAPAATSN) are compositionally biased toward polar residues. A disordered region spans residues 1 to 23 (MSNNKQTAAPAATSNEKAENGAE). The Cytoplasmic portion of the chain corresponds to 1–63 (MSNNKQTAAP…TKDAFKGKYR (63 aa)). The chain crosses the membrane as a helical span at residues 64–86 (VFYGNGLHTSIMFGAGTAALDLM). At 87-1632 (TPGSFLPPFP…ESDGEEMSGE (1546 aa)) the chain is on the extracellular side. Asn149 and Asn274 each carry an N-linked (GlcNAc...) asparagine; by host glycan. Residues 516-538 (ELSSQLGDTDTKKEQKEKRSKQG) form a disordered region. Asn654, Asn719, and Asn797 each carry an N-linked (GlcNAc...) asparagine; by host glycan. Residues 838 to 890 (IKGTKKSDDGDSKTDGSGDMEDDFTSLAKMTNRKRKAGGKDGPSKKKKKDGAD) form a disordered region. Basic and acidic residues-rich tracts occupy residues 842–853 (KKSDDGDSKTDG) and 875–890 (GGKDGPSKKKKKDGAD). Residues Asn1012, Asn1031, Asn1261, Asn1339, Asn1511, and Asn1546 are each glycosylated (N-linked (GlcNAc...) asparagine; by host). The segment at 1603 to 1632 (PSAMDVDEDEDEDMDDESDDESDGEEMSGE) is disordered. The segment covering 1607-1632 (DVDEDEDEDMDDESDDESDGEEMSGE) has biased composition (acidic residues).

The protein localises to the host membrane. This is an uncharacterized protein from Ostreid herpesvirus 1 (isolate France) (OsHV-1).